A 148-amino-acid polypeptide reads, in one-letter code: MAPRAEKKPAEKKTAAERPVEENKAAEKAPAEKKPKAGKKLPPKEAGDKKKKRSKKNVETYKIYIFKVLKQVHPDIGISSKAMGIMNSFINDIFEKLAQESSKLARYNKKPTITSREIQTAVRLVLPGELAKHAVSEGTKAVTKFTSS.

Residues 1–35 (MAPRAEKKPAEKKTAAERPVEENKAAEKAPAEKKP) show a composition bias toward basic and acidic residues. Positions 1-56 (MAPRAEKKPAEKKTAAERPVEENKAAEKAPAEKKPKAGKKLPPKEAGDKKKKRSKK) are disordered. A N,N,N-trimethylalanine; alternate modification is found at alanine 2. Residue alanine 2 is modified to N,N-dimethylalanine; alternate. Alanine 2 carries the post-translational modification N-methylalanine; alternate. An N6-acetyllysine; partial modification is found at lysine 7. Lysine 12 bears the N6-acetyllysine mark. Lysine 13 carries the N6,N6-dimethyllysine modification. N6-acetyllysine is present on residues lysine 28, lysine 33, and lysine 39. Lysine 40 carries the N6-acetyllysine; partial modification. Lysine 144 is covalently cross-linked (Glycyl lysine isopeptide (Lys-Gly) (interchain with G-Cter in ubiquitin)).

Belongs to the histone H2B family. As to quaternary structure, the nucleosome is a histone octamer containing two molecules each of H2A, H2B, H3 and H4 assembled in one H3-H4 heterotetramer and two H2A-H2B heterodimers. The octamer wraps approximately 147 bp of DNA. Interacts with AHL27. Post-translationally, can be acetylated to form H2BK6ac, H2BK33ac and H2BK34ac. Mono-, di- or trimethylated at the N-terminus to form H2BA1me1/2/3. H2BA1me2 may be acetylated to form H2BA1me2K6ac. In terms of processing, monoubiquitinated by BRE1 to form H2BK143ub1 and deubiquitinated by UBP26. Required for heterochromatic histone H3 di- and trimethylation at H3K4me. May give a specific tag for epigenetic transcriptional activation.

It is found in the nucleus. Its subcellular location is the chromosome. Core component of nucleosome. Nucleosomes wrap and compact DNA into chromatin, limiting DNA accessibility to the cellular machineries which require DNA as a template. Histones thereby play a central role in transcription regulation, DNA repair, DNA replication and chromosomal stability. DNA accessibility is regulated via a complex set of post-translational modifications of histones, also called histone code, and nucleosome remodeling. The sequence is that of Histone H2B.1 from Arabidopsis thaliana (Mouse-ear cress).